The sequence spans 113 residues: Large ribosomal subunit protein eL31 (113 aa).

This sequence belongs to the eukaryotic ribosomal protein eL31 family. Component of the large ribosomal subunit (LSU). Mature yeast ribosomes consist of a small (40S) and a large (60S) subunit. The 40S small subunit contains 1 molecule of ribosomal RNA (18S rRNA) and at least 33 different proteins. The large 60S subunit contains 3 rRNA molecules (25S, 5.8S and 5S rRNA) and at least 46 different proteins.

It is found in the cytoplasm. Its function is as follows. Component of the ribosome, a large ribonucleoprotein complex responsible for the synthesis of proteins in the cell. The small ribosomal subunit (SSU) binds messenger RNAs (mRNAs) and translates the encoded message by selecting cognate aminoacyl-transfer RNA (tRNA) molecules. The large subunit (LSU) contains the ribosomal catalytic site termed the peptidyl transferase center (PTC), which catalyzes the formation of peptide bonds, thereby polymerizing the amino acids delivered by tRNAs into a polypeptide chain. The nascent polypeptides leave the ribosome through a tunnel in the LSU and interact with protein factors that function in enzymatic processing, targeting, and the membrane insertion of nascent chains at the exit of the ribosomal tunnel. The chain is Large ribosomal subunit protein eL31 (rpl31) from Schizosaccharomyces pombe (strain 972 / ATCC 24843) (Fission yeast).